We begin with the raw amino-acid sequence, 158 residues long: Protein Smg homolog (158 aa).

Belongs to the Smg family.

This Pseudoalteromonas atlantica (strain T6c / ATCC BAA-1087) protein is Protein Smg homolog.